Reading from the N-terminus, the 346-residue chain is 4-amino-5-hydroxymethyl-2-methylpyrimidine phosphate synthase (346 aa).

Lys-62 is modified (N6-(pyridoxal phosphate)lysine). The active site involves His-66. 114-117 (GEFG) lines the pyridoxal 5'-phosphate pocket. The CCCFC; essential for catalytic activity, may be the site of iron coordination motif lies at 194–198 (CCCFC).

It belongs to the NMT1/THI5 family. As to quaternary structure, homodimer. Fe cation serves as cofactor.

The protein resides in the cytoplasm. The protein localises to the nucleus. The enzyme catalyses N(6)-(pyridoxal phosphate)-L-lysyl-[4-amino-5-hydroxymethyl-2-methylpyrimidine phosphate synthase] + L-histidyl-[4-amino-5-hydroxymethyl-2-methylpyrimidine phosphate synthase] + 2 Fe(3+) + 4 H2O = L-lysyl-[4-amino-5-hydroxymethyl-2-methylpyrimidine phosphate synthase] + (2S)-2-amino-5-hydroxy-4-oxopentanoyl-[4-amino-5-hydroxymethyl-2-methylpyrimidine phosphate synthase] + 4-amino-2-methyl-5-(phosphooxymethyl)pyrimidine + 3-oxopropanoate + 2 Fe(2+) + 2 H(+). Its pathway is cofactor biosynthesis; thiamine diphosphate biosynthesis. Responsible for the formation of the pyrimidine heterocycle in the thiamine biosynthesis pathway. Catalyzes the formation of hydroxymethylpyrimidine phosphate (HMP-P) from histidine and pyridoxal phosphate (PLP). The protein uses PLP and the active site histidine to form HMP-P, generating an inactive enzyme. The enzyme can only undergo a single turnover, which suggests it is a suicide enzyme. This chain is 4-amino-5-hydroxymethyl-2-methylpyrimidine phosphate synthase, found in Schizosaccharomyces pombe (strain 972 / ATCC 24843) (Fission yeast).